The primary structure comprises 959 residues: Translation initiation factor IF-2 (959 aa).

Over residues 1 to 10 the composition is skewed to basic and acidic residues; sequence MSDKTNDDKT. Residues 1-374 are disordered; sequence MSDKTNDDKT…SQMQETREKI (374 aa). Over residues 27–37 the composition is skewed to polar residues; the sequence is EQSTVRQNFSH. Composition is skewed to low complexity over residues 63-118 and 128-138; these read AAAA…VTKP and QRPGGQQAQRP. Basic and acidic residues-rich tracts occupy residues 154 to 225 and 232 to 241; these read SEMD…EAAK and ARSERRDDAR. A compositionally biased stretch (low complexity) spans 246-284; the sequence is GARPQQAGRPQGGRPQPAGRPQQGSPRPAPIIADAAPIA. A compositionally biased stretch (basic and acidic residues) spans 318 to 333; the sequence is PEVRAPKVVKGEDDRR. Positions 457–626 constitute a tr-type G domain; that stretch reads SRPPVVTIMG…LLQAEMLDLK (170 aa). The tract at residues 466-473 is G1; that stretch reads GHVDHGKT. 466 to 473 provides a ligand contact to GTP; it reads GHVDHGKT. Residues 491–495 form a G2 region; the sequence is GITQH. The tract at residues 512-515 is G3; that stretch reads DTPG. GTP-binding positions include 512–516 and 566–569; these read DTPGH and NKID. Residues 566 to 569 are G4; sequence NKID. Residues 602-604 form a G5 region; sequence SAK.

It belongs to the TRAFAC class translation factor GTPase superfamily. Classic translation factor GTPase family. IF-2 subfamily.

It localises to the cytoplasm. One of the essential components for the initiation of protein synthesis. Protects formylmethionyl-tRNA from spontaneous hydrolysis and promotes its binding to the 30S ribosomal subunits. Also involved in the hydrolysis of GTP during the formation of the 70S ribosomal complex. The protein is Translation initiation factor IF-2 of Brucella ovis (strain ATCC 25840 / 63/290 / NCTC 10512).